The chain runs to 838 residues: Kinesin-like protein KIFC2 (838 aa).

The span at 23–32 (AAAAEPGDPA) shows a compositional bias: low complexity. Disordered regions lie at residues 23-48 (AAAAEPGDPAQRARKPRGRRRPDLPA) and 140-185 (LLQG…GQQP). A compositionally biased stretch (polar residues) spans 156-167 (DGSTSQEESPSH). Residues 186-351 (LQLEEDQRAW…SLRQGCGDLR (166 aa)) adopt a coiled-coil conformation. Residues 409–740 (NIRVLCRLRP…ARRSPRGRRI (332 aa)) form the Kinesin motor domain. 484-491 (GQTGTGKT) serves as a coordination point for ATP. Residues 718 to 792 (RSPPTRARPP…SPGPPAPLRR (75 aa)) are disordered.

The protein belongs to the TRAFAC class myosin-kinesin ATPase superfamily. Kinesin family.

The protein localises to the cytoplasm. Its subcellular location is the cytoskeleton. In terms of biological role, may play a role in microtubule-dependent retrograde axonal transport. May function as the motor for the transport of multivesicular body (MVB)-like organelles in dendrites. The polypeptide is Kinesin-like protein KIFC2 (KIFC2) (Homo sapiens (Human)).